Here is a 386-residue protein sequence, read N- to C-terminus: SWI/SNF-related matrix-associated actin-dependent regulator of chromatin subfamily B member 1 (386 aa).

The segment at 1–114 (MMMMALSKTF…DEKYKAVSIS (114 aa)) is DNA-binding.

It belongs to the SNF5 family. Component of the multiprotein chromatin-remodeling complexes SWI/SNF. Component of neural progenitors-specific chromatin remodeling complex (npBAF complex) and the neuron-specific chromatin remodeling complex (nBAF complex). Component of the BAF (SWI/SNF) chromatin remodeling complex. Component of the SWI/SNF-B (PBAF) chromatin remodeling complex. Binds to double-stranded DNA.

The protein resides in the nucleus. In terms of biological role, involved in chromatin-remodeling. Core component of the BAF (SWI/SNF) complex. This ATP-dependent chromatin-remodeling complex plays important roles in cell proliferation and differentiation, in cellular antiviral activities and inhibition of tumor formation. Belongs to the neural progenitors-specific chromatin remodeling complex (npBAF complex) and the neuron-specific chromatin remodeling complex (nBAF complex) and may play a role in neural development. This chain is SWI/SNF-related matrix-associated actin-dependent regulator of chromatin subfamily B member 1 (SMARCB1), found in Gallus gallus (Chicken).